The chain runs to 213 residues: Small ribosomal subunit protein uS4 (213 aa).

The tract at residues 16–53 is disordered; the sequence is GTDLGLKSGVKPYDVKTKKSARPPGQHGVSRNKSSEYS. Residues 44 to 53 are compositionally biased toward polar residues; the sequence is VSRNKSSEYS. One can recognise an S4 RNA-binding domain in the interval 97–163; it reads SRLDNVVYRM…EKSREQLRIK (67 aa).

Belongs to the universal ribosomal protein uS4 family. As to quaternary structure, part of the 30S ribosomal subunit. Contacts protein S5. The interaction surface between S4 and S5 is involved in control of translational fidelity.

In terms of biological role, one of the primary rRNA binding proteins, it binds directly to 16S rRNA where it nucleates assembly of the body of the 30S subunit. Its function is as follows. With S5 and S12 plays an important role in translational accuracy. The protein is Small ribosomal subunit protein uS4 of Psychrobacter arcticus (strain DSM 17307 / VKM B-2377 / 273-4).